The chain runs to 209 residues: MERTLWDITPALSPTTPTWPGDTPFSQEIAWKLEGDCPVNVGRITLSPHTGAHADAPLHYRADGAAIGQVPLDAYLGLCRVIHCVGVARVEPEHVRDALTNAPPRVLLRTYAHMPQTAWDNDFAAVAPETIALLATHGVKLIGVDTASLDPQTSKTMDAHHAVGKHGLAILEGLLLDDVPAGDYELIALPLKFATLDASPVRAVLRSLP.

Tryptophan 19 provides a ligand contact to substrate. Zn(2+) is bound by residues histidine 49, histidine 53, and aspartate 55. Histidine 59 (proton donor/acceptor) is an active-site residue. Histidine 160 and glutamate 172 together coordinate Zn(2+).

This sequence belongs to the Cyclase 1 superfamily. KynB family. As to quaternary structure, homodimer. It depends on Zn(2+) as a cofactor.

The enzyme catalyses N-formyl-L-kynurenine + H2O = L-kynurenine + formate + H(+). The protein operates within amino-acid degradation; L-tryptophan degradation via kynurenine pathway; L-kynurenine from L-tryptophan: step 2/2. Functionally, catalyzes the hydrolysis of N-formyl-L-kynurenine to L-kynurenine, the second step in the kynurenine pathway of tryptophan degradation. In Ralstonia pickettii (strain 12J), this protein is Kynurenine formamidase.